The sequence spans 367 residues: Phosphoribosylaminoimidazole-succinocarboxamide synthase (367 aa).

The protein belongs to the SAICAR synthetase family.

The enzyme catalyses 5-amino-1-(5-phospho-D-ribosyl)imidazole-4-carboxylate + L-aspartate + ATP = (2S)-2-[5-amino-1-(5-phospho-beta-D-ribosyl)imidazole-4-carboxamido]succinate + ADP + phosphate + 2 H(+). Its pathway is purine metabolism; IMP biosynthesis via de novo pathway; 5-amino-1-(5-phospho-D-ribosyl)imidazole-4-carboxamide from 5-amino-1-(5-phospho-D-ribosyl)imidazole-4-carboxylate: step 1/2. The chain is Phosphoribosylaminoimidazole-succinocarboxamide synthase from Shewanella halifaxensis (strain HAW-EB4).